A 560-amino-acid polypeptide reads, in one-letter code: Dihydroxy-acid dehydratase (560 aa).

D80 contributes to the Mg(2+) binding site. C121 is a [2Fe-2S] cluster binding site. Residues D122 and K123 each contribute to the Mg(2+) site. Residue K123 is modified to N6-carboxylysine. C194 lines the [2Fe-2S] cluster pocket. E447 contacts Mg(2+). S473 serves as the catalytic Proton acceptor.

The protein belongs to the IlvD/Edd family. In terms of assembly, homodimer. [2Fe-2S] cluster is required as a cofactor. The cofactor is Mg(2+).

It catalyses the reaction (2R)-2,3-dihydroxy-3-methylbutanoate = 3-methyl-2-oxobutanoate + H2O. The enzyme catalyses (2R,3R)-2,3-dihydroxy-3-methylpentanoate = (S)-3-methyl-2-oxopentanoate + H2O. It functions in the pathway amino-acid biosynthesis; L-isoleucine biosynthesis; L-isoleucine from 2-oxobutanoate: step 3/4. Its pathway is amino-acid biosynthesis; L-valine biosynthesis; L-valine from pyruvate: step 3/4. Functionally, functions in the biosynthesis of branched-chain amino acids. Catalyzes the dehydration of (2R,3R)-2,3-dihydroxy-3-methylpentanoate (2,3-dihydroxy-3-methylvalerate) into 2-oxo-3-methylpentanoate (2-oxo-3-methylvalerate) and of (2R)-2,3-dihydroxy-3-methylbutanoate (2,3-dihydroxyisovalerate) into 2-oxo-3-methylbutanoate (2-oxoisovalerate), the penultimate precursor to L-isoleucine and L-valine, respectively. The chain is Dihydroxy-acid dehydratase from Chloroherpeton thalassium (strain ATCC 35110 / GB-78).